The sequence spans 412 residues: uncharacterized protein (412 aa).

Positions 1–21 (MIIPMLRILLIVLFVLNLVTS) are cleaved as a signal peptide. Disordered stretches follow at residues 85 to 134 (QPPA…STTT), 250 to 294 (STTE…TPGT), and 327 to 357 (VELG…HVRE). Over residues 88 to 105 (ASLTSLPAAPPSAQVAPP) the composition is skewed to low complexity. A compositionally biased stretch (polar residues) spans 124–134 (TPQASISSTTT). 2 stretches are compositionally biased toward low complexity: residues 250-259 (STTENTTEQS) and 266-293 (TTST…GTPG). Acidic residues predominate over residues 330–347 (GEGDDDEENDDDSSEEEE). Residues 348–357 (TKPPARHVRE) are compositionally biased toward basic and acidic residues. The ShKT domain occupies 371 to 408 (CDEEEDDKGKICKLWAAGGLCGTHKPTMFLFCRKTCLC).

This is an uncharacterized protein from Caenorhabditis elegans.